We begin with the raw amino-acid sequence, 179 residues long: Shikimate kinase (179 aa).

Residue 15-20 (GAGKTS) participates in ATP binding. T19 contacts Mg(2+). Positions 37, 61, and 83 each coordinate substrate. ATP is bound at residue R122. R142 serves as a coordination point for substrate.

This sequence belongs to the shikimate kinase family. In terms of assembly, monomer. Mg(2+) serves as cofactor.

It localises to the cytoplasm. The enzyme catalyses shikimate + ATP = 3-phosphoshikimate + ADP + H(+). Its pathway is metabolic intermediate biosynthesis; chorismate biosynthesis; chorismate from D-erythrose 4-phosphate and phosphoenolpyruvate: step 5/7. Functionally, catalyzes the specific phosphorylation of the 3-hydroxyl group of shikimic acid using ATP as a cosubstrate. The polypeptide is Shikimate kinase (Coxiella burnetii (strain RSA 331 / Henzerling II)).